The sequence spans 61 residues: Small ribosomal subunit protein uS14 (61 aa).

Positions 24, 27, 40, and 43 each coordinate Zn(2+).

The protein belongs to the universal ribosomal protein uS14 family. Zinc-binding uS14 subfamily. In terms of assembly, part of the 30S ribosomal subunit. Contacts proteins S3 and S10. Requires Zn(2+) as cofactor.

In terms of biological role, binds 16S rRNA, required for the assembly of 30S particles and may also be responsible for determining the conformation of the 16S rRNA at the A site. In Moorella thermoacetica (strain ATCC 39073 / JCM 9320), this protein is Small ribosomal subunit protein uS14.